The primary structure comprises 203 residues: Membrane-spanning 4-domains subfamily A member 13 (203 aa).

The next 4 helical transmembrane spans lie at 15-35, 56-76, 84-104, and 141-161; these read VLGV…YFLL, MGTS…VKAA, ILCT…AASL, and FAIA…SSIV.

It belongs to the MS4A family.

It localises to the membrane. Its function is as follows. May be involved in signal transduction as a component of a multimeric receptor complex. This is Membrane-spanning 4-domains subfamily A member 13 (Ms4a13) from Mus musculus (Mouse).